Here is a 438-residue protein sequence, read N- to C-terminus: UDP-N-acetylmuramoylalanine--D-glutamate ligase (438 aa).

105 to 111 (GSNGKTT) lines the ATP pocket.

Belongs to the MurCDEF family.

The protein resides in the cytoplasm. The enzyme catalyses UDP-N-acetyl-alpha-D-muramoyl-L-alanine + D-glutamate + ATP = UDP-N-acetyl-alpha-D-muramoyl-L-alanyl-D-glutamate + ADP + phosphate + H(+). The protein operates within cell wall biogenesis; peptidoglycan biosynthesis. Functionally, cell wall formation. Catalyzes the addition of glutamate to the nucleotide precursor UDP-N-acetylmuramoyl-L-alanine (UMA). The protein is UDP-N-acetylmuramoylalanine--D-glutamate ligase of Oenococcus oeni (strain ATCC BAA-331 / PSU-1).